Reading from the N-terminus, the 62-residue chain is Sec-independent protein translocase protein TatAc (62 aa).

Residues 8–28 (ILVILFVGFLVFGPDKLPALG) traverse the membrane as a helical segment.

It belongs to the TatA/E family. Forms a complex with TatC.

The protein resides in the cell membrane. Part of the twin-arginine translocation (Tat) system that transports large folded proteins containing a characteristic twin-arginine motif in their signal peptide across membranes. TatA could form the protein-conducting channel of the Tat system. In Bacillus subtilis (strain 168), this protein is Sec-independent protein translocase protein TatAc.